Here is a 105-residue protein sequence, read N- to C-terminus: MAKVHVRRTDKVVVISGKDKGKVSEVLAVYPKTSKVLVKDANVVTKHVKPNRENMQGGIVKKEAPMNSSKVMLYCTNCNSATRISKKLLEDGTKVRVCKKCGEIL.

Belongs to the universal ribosomal protein uL24 family. In terms of assembly, part of the 50S ribosomal subunit.

Functionally, one of two assembly initiator proteins, it binds directly to the 5'-end of the 23S rRNA, where it nucleates assembly of the 50S subunit. In terms of biological role, one of the proteins that surrounds the polypeptide exit tunnel on the outside of the subunit. This is Large ribosomal subunit protein uL24 from Clostridium novyi (strain NT).